A 321-amino-acid polypeptide reads, in one-letter code: Lipoyl synthase (321 aa).

Residues Cys-68, Cys-73, Cys-79, Cys-94, Cys-98, Cys-101, and Ser-308 each coordinate [4Fe-4S] cluster. The Radical SAM core domain maps to 80–297 (FNHGTATFMI…KALADELGFT (218 aa)).

This sequence belongs to the radical SAM superfamily. Lipoyl synthase family. [4Fe-4S] cluster serves as cofactor.

It localises to the cytoplasm. The catalysed reaction is [[Fe-S] cluster scaffold protein carrying a second [4Fe-4S](2+) cluster] + N(6)-octanoyl-L-lysyl-[protein] + 2 oxidized [2Fe-2S]-[ferredoxin] + 2 S-adenosyl-L-methionine + 4 H(+) = [[Fe-S] cluster scaffold protein] + N(6)-[(R)-dihydrolipoyl]-L-lysyl-[protein] + 4 Fe(3+) + 2 hydrogen sulfide + 2 5'-deoxyadenosine + 2 L-methionine + 2 reduced [2Fe-2S]-[ferredoxin]. The protein operates within protein modification; protein lipoylation via endogenous pathway; protein N(6)-(lipoyl)lysine from octanoyl-[acyl-carrier-protein]: step 2/2. In terms of biological role, catalyzes the radical-mediated insertion of two sulfur atoms into the C-6 and C-8 positions of the octanoyl moiety bound to the lipoyl domains of lipoate-dependent enzymes, thereby converting the octanoylated domains into lipoylated derivatives. The protein is Lipoyl synthase of Shewanella baltica (strain OS223).